The chain runs to 244 residues: 5-oxoprolinase subunit A (244 aa).

The protein belongs to the LamB/PxpA family. As to quaternary structure, forms a complex composed of PxpA, PxpB and PxpC.

It catalyses the reaction 5-oxo-L-proline + ATP + 2 H2O = L-glutamate + ADP + phosphate + H(+). Its function is as follows. Catalyzes the cleavage of 5-oxoproline to form L-glutamate coupled to the hydrolysis of ATP to ADP and inorganic phosphate. The sequence is that of 5-oxoprolinase subunit A from Salmonella schwarzengrund (strain CVM19633).